The following is a 463-amino-acid chain: Chromogranin-A (463 aa).

The signal sequence occupies residues 1–18 (MRSTAVLALLLCAGQVFA). A disulfide bond links C35 and C56. The tract at residues 88–440 (KERAQQPLKQ…ANRRAEDQEL (353 aa)) is disordered. A compositionally biased stretch (low complexity) spans 92–116 (QQPLKQQQPPKQQQQQQQQQQQEQQ). S119 is modified (phosphoserine). Residues 134–160 (DAKHRDAAAEVPSRDTMEKRKDSDKGQ) are compositionally biased toward basic and acidic residues. A compositionally biased stretch (polar residues) spans 196–208 (TATNTQSPTSLPS). S220, S282, and S308 each carry phosphoserine. A compositionally biased stretch (basic and acidic residues) spans 301–310 (GKGELEHSQQ). The residue at position 329 (G329) is a Glycine amide. 2 stretches are compositionally biased toward basic and acidic residues: residues 331-340 (KGRELEHKQE) and 348-375 (RLSR…KRLE). S350 and S383 each carry phosphoserine. M384 bears the Methionine sulfoxide mark. The span at 409 to 437 (SSREDSVEARSDFEEKKEEEGSANRRAED) shows a compositional bias: basic and acidic residues. Phosphoserine occurs at positions 410, 414, and 430. An O-linked (Xyl...) (chondroitin sulfate) serine glycan is attached at S430. The residue at position 438 (Q438) is a Pyrrolidone carboxylic acid. S444 bears the Phosphoserine mark.

This sequence belongs to the chromogranin/secretogranin protein family. In terms of assembly, self-interacts; self-assembly is promoted in vitro by chondroitin sulfate attachment which occurs at mildly acidic pH conditions. Interacts with SCG3; this interaction is optimal in conditions mimicking the lumenal milieu of the trans-Golgi network, i.e. pH 5.5 and 10 mM Ca(+2). Interacts with ITPR1 in the secretory granules. In terms of processing, O-glycosylated; contains chondroitin sulfate (CS). CS attachment is pH-dependent, being observed at mildly acidic conditions of pH 5 but not at neutral pH, and promotes self-assembly in vitro.

It localises to the cytoplasmic vesicle. The protein resides in the secretory vesicle. Its subcellular location is the neuronal dense core vesicle. The protein localises to the secreted. Functionally, strongly inhibits glucose induced insulin release from the pancreas. Inhibits catecholamine release from chromaffin cells and noradrenergic neurons by acting as a non-competitive nicotinic cholinergic antagonist. Can induce mast cell migration, degranulation and production of cytokines and chemokines. Its function is as follows. Regulates granule biogenesis in endocrine cells by up-regulating the transcription of protease nexin 1 (SERPINE2) via a cAMP-PKA-SP1 pathway. This leads to inhibition of granule protein degradation in the Golgi complex which in turn promotes granule formation. Pyroglutaminated (pGlu)-serpinin exerts an antiapoptotic effect on cells exposed to oxidative stress. The protein is Chromogranin-A (Chga) of Mus musculus (Mouse).